Here is a 360-residue protein sequence, read N- to C-terminus: Aminomethyltransferase (360 aa).

This sequence belongs to the GcvT family. As to quaternary structure, the glycine cleavage system is composed of four proteins: P, T, L and H.

The catalysed reaction is N(6)-[(R)-S(8)-aminomethyldihydrolipoyl]-L-lysyl-[protein] + (6S)-5,6,7,8-tetrahydrofolate = N(6)-[(R)-dihydrolipoyl]-L-lysyl-[protein] + (6R)-5,10-methylene-5,6,7,8-tetrahydrofolate + NH4(+). Its function is as follows. The glycine cleavage system catalyzes the degradation of glycine. This Legionella pneumophila subsp. pneumophila (strain Philadelphia 1 / ATCC 33152 / DSM 7513) protein is Aminomethyltransferase.